The primary structure comprises 117 residues: Protein Aeq5-like2 (117 aa).

Residues 1–36 are Cytoplasmic-facing; it reads MLVNARAIRQSIGIVVAQCRRDLESNRTLDYRTRMR. The helical transmembrane segment at 37 to 56 threads the bilayer; that stretch reads TSLILVAMVMVSVLLPYTYG. Over 57 to 117 the chain is Extracellular; it reads SSCDSFCTEQ…RFTKEPTEES (61 aa). Intrachain disulfides connect cysteine 59/cysteine 94, cysteine 63/cysteine 90, cysteine 70/cysteine 83, and cysteine 74/cysteine 80.

Post-translationally, the mature peptide may be cleaved at a dibasic residue site and be shorter than the sequence shown (possibly residues 1-94). In terms of tissue distribution, expressed in endodermal ganglion neurons, apparently bipolar and following mesentery folds (observed in both planulae and primary polyps). It not expressed in nematocytes.

It localises to the membrane. The protein is Protein Aeq5-like2 of Nematostella vectensis (Starlet sea anemone).